The chain runs to 210 residues: Regulatory protein RecX (210 aa).

Residues 28–47 form a disordered region; it reads SRRQEEGAASSLFDREAEEK.

This sequence belongs to the RecX family.

The protein resides in the cytoplasm. Modulates RecA activity. This is Regulatory protein RecX from Corynebacterium efficiens (strain DSM 44549 / YS-314 / AJ 12310 / JCM 11189 / NBRC 100395).